Consider the following 339-residue polypeptide: Protoheme IX farnesyltransferase (339 aa).

The disordered stretch occupies residues 1–27 (MTVADPRLTDAPAHSRTSLLGRRRGGR). The next 9 helical transmembrane spans lie at 45–65 (IVEL…GGLP), 67–87 (GWLI…ANTL), 117–136 (ALVF…VAFV), 140–159 (SAAL…TLLL), 165–185 (QNIV…WTAV), 191–211 (WAPF…YWPL), 236–256 (VSRQ…LLVP), 257–277 (LGGA…GFLV), and 309–329 (PMGV…AVAV).

Belongs to the UbiA prenyltransferase family. Protoheme IX farnesyltransferase subfamily.

It is found in the cell membrane. It carries out the reaction heme b + (2E,6E)-farnesyl diphosphate + H2O = Fe(II)-heme o + diphosphate. The protein operates within porphyrin-containing compound metabolism; heme O biosynthesis; heme O from protoheme: step 1/1. In terms of biological role, converts heme B (protoheme IX) to heme O by substitution of the vinyl group on carbon 2 of heme B porphyrin ring with a hydroxyethyl farnesyl side group. The protein is Protoheme IX farnesyltransferase of Kineococcus radiotolerans (strain ATCC BAA-149 / DSM 14245 / SRS30216).